We begin with the raw amino-acid sequence, 29 residues long: Snake venom metalloproteinase bothrolysin (29 aa).

Residues 6–29 form the Peptidase M12B domain; that stretch reads RYIELFLVVDSGMFMKYNGNSDKI. Residue glutamate 9 coordinates Ca(2+).

The protein belongs to the venom metalloproteinase (M12B) family. Zn(2+) is required as a cofactor. In terms of tissue distribution, expressed by the venom gland.

It localises to the secreted. It carries out the reaction Cleavage of 4-Gln-|-His-5, 9-Ser-|-His-10 and 14-Ala-|-Leu-15 of insulin B chain and Pro-|-Phe of angiotensin I.. Functionally, snake venom zinc metalloproteinase that impairs hemostasis in the envenomed animal. This Bothrops jararaca (Jararaca) protein is Snake venom metalloproteinase bothrolysin.